The sequence spans 252 residues: Protein BTG3 (252 aa).

The interval 138 to 165 (VTSDYHSGSSSSDEETSKEVEVKPNSVT) is disordered.

It belongs to the BTG family.

Functionally, overexpression impairs serum-induced cell cycle progression from the G0/G1 to S phase. This is Protein BTG3 (BTG3) from Sus scrofa (Pig).